Here is a 73-residue protein sequence, read N- to C-terminus: UPF0235 protein PCC7424_0673 (73 aa).

The protein belongs to the UPF0235 family.

The polypeptide is UPF0235 protein PCC7424_0673 (Gloeothece citriformis (strain PCC 7424) (Cyanothece sp. (strain PCC 7424))).